The chain runs to 33 residues: Brevinin-2Rk (33 aa).

Residues cysteine 27 and cysteine 33 are joined by a disulfide bond.

Expressed by the skin glands.

The protein resides in the secreted. In terms of biological role, antimicrobial peptide. The sequence is that of Brevinin-2Rk from Pelophylax ridibundus (Marsh frog).